The following is a 1074-amino-acid chain: Calcium-transporting ATPase 8, plasma membrane-type (1074 aa).

The interval 1–33 (MTSLLKSSPGRRRGGDVESGKSEHADSDSDTFY) is disordered. Residues 1–180 (MTSLLKSSPG…NTYPRKKGKG (180 aa)) are Cytoplasmic-facing. Residues 13-27 (RGGDVESGKSEHADS) show a composition bias toward basic and acidic residues. Residues 43 to 54 (RLQQWRKAALVL) are interaction with calmodulin. The chain crosses the membrane as a helical span at residues 181–201 (FLRFLWDACHDLTLIILMVAA). Topologically, residues 202–219 (VASLALGIKTEGIKEGWY) are extracellular. A helical membrane pass occupies residues 220–240 (DGGSIAFAVILVIVVTAVSDY). Residues 241–369 (KQSLQFQNLN…GEETPLQVRL (129 aa)) are Cytoplasmic-facing. The helical transmembrane segment at 370 to 389 (NGVATFIGSIGLAVAAAVLV) threads the bilayer. At 390 to 426 (ILLTRYFTGHTKDNNGGPQFVKGKTKVGHVIDDVVKV) the chain is on the extracellular side. The helical transmembrane segment at 427-444 (LTVAVTIVVVAVPEGLPL) threads the bilayer. At 445-840 (AVTLTLAYSM…RWGRSVYANI (396 aa)) the chain is on the cytoplasmic side. Aspartate 482 functions as the 4-aspartylphosphate intermediate in the catalytic mechanism. Residues aspartate 785 and aspartate 789 each coordinate Mg(2+). A helical membrane pass occupies residues 841 to 859 (QKFIQFQLTVNVAALVINV). Topologically, residues 860–870 (VAAISSGDVPL) are extracellular. Residues 871 to 891 (TAVQLLWVNLIMDTLGALALA) traverse the membrane as a helical segment. Residues 892-911 (TEPPTDHLMGRPPVGRKEPL) lie on the Cytoplasmic side of the membrane. A helical membrane pass occupies residues 912–934 (ITNIMWRNLLIQAIYQVSVLLTL). At 935 to 949 (NFRGISILGLEHEVH) the chain is on the extracellular side. Residues 950 to 971 (EHATRVKNTIIFNAFVLCQAFN) form a helical membrane-spanning segment. The Cytoplasmic portion of the chain corresponds to 972-989 (EFNARKPDEKNIFKGVIK). A helical membrane pass occupies residues 990 to 1011 (NRLFMGIIVITLVLQVIIVEFL). At 1012-1021 (GKFASTTKLN) the chain is on the extracellular side. A helical membrane pass occupies residues 1022–1043 (WKQWLICVGIGVISWPLALVGK). Residues 1044 to 1074 (FIPVPAAPISNKLKVLKFWGKKKNSSGEGSL) lie on the Cytoplasmic side of the membrane.

This sequence belongs to the cation transport ATPase (P-type) (TC 3.A.3) family. Type IIB subfamily.

Its subcellular location is the cell membrane. It carries out the reaction Ca(2+)(in) + ATP + H2O = Ca(2+)(out) + ADP + phosphate + H(+). Its activity is regulated as follows. Activated by calmodulin. This magnesium-dependent enzyme catalyzes the hydrolysis of ATP coupled with the translocation of calcium from the cytosol out of the cell. The protein is Calcium-transporting ATPase 8, plasma membrane-type (ACA8) of Arabidopsis thaliana (Mouse-ear cress).